The following is a 336-amino-acid chain: Inositol 2-dehydrogenase (336 aa).

It belongs to the Gfo/Idh/MocA family. As to quaternary structure, homotetramer.

The catalysed reaction is myo-inositol + NAD(+) = scyllo-inosose + NADH + H(+). Functionally, involved in the oxidation of myo-inositol (MI) to 2-keto-myo-inositol (2KMI or 2-inosose). The chain is Inositol 2-dehydrogenase from Pseudomonas fluorescens (strain ATCC BAA-477 / NRRL B-23932 / Pf-5).